A 296-amino-acid chain; its full sequence is Phosphatidylglycerol--prolipoprotein diacylglyceryl transferase (296 aa).

4 consecutive transmembrane segments (helical) span residues tryptophan 28–alanine 48, phenylalanine 72–tyrosine 92, glycine 110–tryptophan 130, and leucine 139–isoleucine 159. Residue arginine 160 participates in a 1,2-diacyl-sn-glycero-3-phospho-(1'-sn-glycerol) binding. 3 helical membrane-spanning segments follow: residues valine 197–tyrosine 217, glycine 226–phenylalanine 246, and glycine 263–leucine 283.

Belongs to the Lgt family.

It is found in the cell inner membrane. It carries out the reaction L-cysteinyl-[prolipoprotein] + a 1,2-diacyl-sn-glycero-3-phospho-(1'-sn-glycerol) = an S-1,2-diacyl-sn-glyceryl-L-cysteinyl-[prolipoprotein] + sn-glycerol 1-phosphate + H(+). Its pathway is protein modification; lipoprotein biosynthesis (diacylglyceryl transfer). Its function is as follows. Catalyzes the transfer of the diacylglyceryl group from phosphatidylglycerol to the sulfhydryl group of the N-terminal cysteine of a prolipoprotein, the first step in the formation of mature lipoproteins. This is Phosphatidylglycerol--prolipoprotein diacylglyceryl transferase from Chlamydia caviae (strain ATCC VR-813 / DSM 19441 / 03DC25 / GPIC) (Chlamydophila caviae).